A 345-amino-acid polypeptide reads, in one-letter code: Phosphoribosylformylglycinamidine cyclo-ligase (345 aa).

The protein belongs to the AIR synthase family.

It is found in the cytoplasm. The enzyme catalyses 2-formamido-N(1)-(5-O-phospho-beta-D-ribosyl)acetamidine + ATP = 5-amino-1-(5-phospho-beta-D-ribosyl)imidazole + ADP + phosphate + H(+). It functions in the pathway purine metabolism; IMP biosynthesis via de novo pathway; 5-amino-1-(5-phospho-D-ribosyl)imidazole from N(2)-formyl-N(1)-(5-phospho-D-ribosyl)glycinamide: step 2/2. The sequence is that of Phosphoribosylformylglycinamidine cyclo-ligase from Histophilus somni (strain 2336) (Haemophilus somnus).